Consider the following 1482-residue polypeptide: Chromosome partition protein MukB (1482 aa).

34–41 (GGNGAGKS) lines the ATP pocket. Coiled coils occupy residues 326–472 (LEAD…QTAH), 507–602 (NQRH…RRAP), 780–805 (RAARENRIETLHAERESLSERFATLS), 832–1110 (DDPE…REQV), and 1209–1265 (VEAI…LQSV). The flexible hinge stretch occupies residues 666-783 (PGGSEDPRLN…SLPLFGRAAR (118 aa)).

It belongs to the SMC family. MukB subfamily. As to quaternary structure, homodimerization via its hinge domain. Binds to DNA via its C-terminal region. Interacts, and probably forms a ternary complex, with MukE and MukF via its C-terminal region. The complex formation is stimulated by calcium or magnesium. Interacts with tubulin-related protein FtsZ.

The protein resides in the cytoplasm. Its subcellular location is the nucleoid. Plays a central role in chromosome condensation, segregation and cell cycle progression. Functions as a homodimer, which is essential for chromosome partition. Involved in negative DNA supercoiling in vivo, and by this means organize and compact chromosomes. May achieve or facilitate chromosome segregation by condensation DNA from both sides of a centrally located replisome during cell division. In Klebsiella pneumoniae subsp. pneumoniae (strain ATCC 700721 / MGH 78578), this protein is Chromosome partition protein MukB.